The chain runs to 400 residues: Argininosuccinate synthase (400 aa).

8-16 contributes to the ATP binding site; that stretch reads AYSGGLDTS. Tyr-87 serves as a coordination point for L-citrulline. Gly-117 lines the ATP pocket. Thr-119, Asn-123, and Asp-124 together coordinate L-aspartate. Asn-123 lines the L-citrulline pocket. Residues Arg-127, Ser-175, Glu-260, and Tyr-272 each contribute to the L-citrulline site.

It belongs to the argininosuccinate synthase family. Type 1 subfamily. In terms of assembly, homotetramer.

Its subcellular location is the cytoplasm. The catalysed reaction is L-citrulline + L-aspartate + ATP = 2-(N(omega)-L-arginino)succinate + AMP + diphosphate + H(+). The protein operates within amino-acid biosynthesis; L-arginine biosynthesis; L-arginine from L-ornithine and carbamoyl phosphate: step 2/3. The polypeptide is Argininosuccinate synthase (Mycolicibacterium gilvum (strain PYR-GCK) (Mycobacterium gilvum (strain PYR-GCK))).